Here is a 134-residue protein sequence, read N- to C-terminus: Small ribosomal subunit protein bS6 (134 aa).

The disordered stretch occupies residues 99–134; sequence EPSAMMQKRDRDERKDRERGRRRDEDGFSGDRNEEN. Over residues 105 to 134 the composition is skewed to basic and acidic residues; sequence QKRDRDERKDRERGRRRDEDGFSGDRNEEN.

The protein belongs to the bacterial ribosomal protein bS6 family.

In terms of biological role, binds together with bS18 to 16S ribosomal RNA. The polypeptide is Small ribosomal subunit protein bS6 (Methylobacterium nodulans (strain LMG 21967 / CNCM I-2342 / ORS 2060)).